The sequence spans 479 residues: Bifunctional aspartate aminotransferase and glutamate/aspartate-prephenate aminotransferase (479 aa).

A chloroplast-targeting transit peptide spans methionine 1–arginine 79. Residue glycine 111 coordinates L-aspartate. Alanine 172–lysine 173 serves as a coordination point for pyridoxal 5'-phosphate. The L-aspartate site is built by tryptophan 197 and asparagine 247. Pyridoxal 5'-phosphate is bound by residues asparagine 247, tyrosine 279, and glycine 307–serine 309. Lysine 310 carries the post-translational modification N6-(pyridoxal phosphate)lysine. Arginine 318 is a binding site for pyridoxal 5'-phosphate. Arginine 449 contributes to the L-aspartate binding site.

Belongs to the class-I pyridoxal-phosphate-dependent aminotransferase family. As to quaternary structure, homodimer. It depends on pyridoxal 5'-phosphate as a cofactor. In terms of tissue distribution, expressed in flowers, pistils, stamens, ovaries and at lower levels in leaves and sepals.

Its subcellular location is the plastid. The protein resides in the chloroplast. It carries out the reaction L-aspartate + 2-oxoglutarate = oxaloacetate + L-glutamate. The enzyme catalyses L-arogenate + oxaloacetate = prephenate + L-aspartate. The catalysed reaction is L-arogenate + 2-oxoglutarate = prephenate + L-glutamate. Its pathway is amino-acid biosynthesis; L-phenylalanine biosynthesis; L-arogenate from prephenate (L-Asp route): step 1/1. It functions in the pathway amino-acid biosynthesis; L-phenylalanine biosynthesis; L-arogenate from prephenate (L-Glu route): step 1/1. Functionally, prokaryotic-type aspartate aminotransferase. Also has a prenate transaminase activity. Involved in the aromatic amino acids biosynthesis pathway via the arogenate route. Required for the transamination of prephenate into arogenate. Can use 2-oxoglutarate, oxaloacetate and prephenate as substrates, but not phenylpyruvate or 4-hydroxyphenylpyruvate. The protein is Bifunctional aspartate aminotransferase and glutamate/aspartate-prephenate aminotransferase of Petunia hybrida (Petunia).